The chain runs to 509 residues: MNTAPTTDNNAVRKHDVRPELFVDGYEVVIGIEIHCQLNTESKIFSSAPTDFGHEPNTQASIVDLGLPGVLPVLNAGVVDRALKFGIGVNAELGLFNTFDRKNYFYPDLPKGYQITQMANPIVGEGYIDVVVNEGEKNEYPKRMGITRAHLEEDAGKSVHDAVDGMTGVDLNRAGTPLIEIVSEPDMRSAHEALAYIKAIHQLVTWLGISDAIMAEGSFRCDCNVSIRKPGAELGTRTELKNLNSFRFIERAINREIERQIDILEDGGKVVQATMLYDPERDETRVMRTKEDANDYRYFPDPDLLPVRIEQLTVDSIRAAMPELPVARRARFEEALGLSEYDARILTGSRQIADYFEDVVAEIDQQDAKMAANWVMGDLLGALNKDDKDIIDSPISAKQLAGMLARIKDDTLSGKLAKKVFGALYERAGGDADDAADKIIEEKGLKQETDTGAIKAIVEEVIAKNTAMVEEYRGGKEKAFNGLVGQVMKASRGSANPQQVNQILKELLD.

This sequence belongs to the GatB/GatE family. GatB subfamily. Heterotrimer of A, B and C subunits.

The enzyme catalyses L-glutamyl-tRNA(Gln) + L-glutamine + ATP + H2O = L-glutaminyl-tRNA(Gln) + L-glutamate + ADP + phosphate + H(+). It catalyses the reaction L-aspartyl-tRNA(Asn) + L-glutamine + ATP + H2O = L-asparaginyl-tRNA(Asn) + L-glutamate + ADP + phosphate + 2 H(+). Allows the formation of correctly charged Asn-tRNA(Asn) or Gln-tRNA(Gln) through the transamidation of misacylated Asp-tRNA(Asn) or Glu-tRNA(Gln) in organisms which lack either or both of asparaginyl-tRNA or glutaminyl-tRNA synthetases. The reaction takes place in the presence of glutamine and ATP through an activated phospho-Asp-tRNA(Asn) or phospho-Glu-tRNA(Gln). This is Aspartyl/glutamyl-tRNA(Asn/Gln) amidotransferase subunit B from Psychrobacter arcticus (strain DSM 17307 / VKM B-2377 / 273-4).